Consider the following 309-residue polypeptide: tRNA dimethylallyltransferase (309 aa).

13 to 20 provides a ligand contact to ATP; that stretch reads GPTGAGKT. A substrate-binding site is contributed by 15 to 20; sequence TGAGKT. 2 interaction with substrate tRNA regions span residues 38–41 and 162–166; these read DSRQ and QRVTR.

The protein belongs to the IPP transferase family. As to quaternary structure, monomer. It depends on Mg(2+) as a cofactor.

It catalyses the reaction adenosine(37) in tRNA + dimethylallyl diphosphate = N(6)-dimethylallyladenosine(37) in tRNA + diphosphate. In terms of biological role, catalyzes the transfer of a dimethylallyl group onto the adenine at position 37 in tRNAs that read codons beginning with uridine, leading to the formation of N6-(dimethylallyl)adenosine (i(6)A). The sequence is that of tRNA dimethylallyltransferase from Nitratidesulfovibrio vulgaris (strain ATCC 29579 / DSM 644 / CCUG 34227 / NCIMB 8303 / VKM B-1760 / Hildenborough) (Desulfovibrio vulgaris).